The primary structure comprises 74 residues: Anaphase-promoting complex subunit 13 (74 aa).

Positions L33–Q53 are disordered.

This sequence belongs to the APC13 family. In terms of assembly, the mammalian APC/C is composed at least of 14 distinct subunits ANAPC1, ANAPC2, CDC27/APC3, ANAPC4, ANAPC5, CDC16/APC6, ANAPC7, CDC23/APC8, ANAPC10, ANAPC11, CDC26/APC12, ANAPC13, ANAPC15 and ANAPC16 that assemble into a complex of at least 19 chains with a combined molecular mass of around 1.2 MDa; APC/C interacts with FZR1 and FBXO5.

It is found in the nucleus. Its pathway is protein modification; protein ubiquitination. In terms of biological role, component of the anaphase promoting complex/cyclosome (APC/C), a cell cycle-regulated E3 ubiquitin ligase that controls progression through mitosis and the G1 phase of the cell cycle. The APC/C complex acts by mediating ubiquitination and subsequent degradation of target proteins: it mainly mediates the formation of 'Lys-11'-linked polyubiquitin chains and, to a lower extent, the formation of 'Lys-48'- and 'Lys-63'-linked polyubiquitin chains. The APC/C complex catalyzes assembly of branched 'Lys-11'-/'Lys-48'-linked branched ubiquitin chains on target proteins. The protein is Anaphase-promoting complex subunit 13 (ANAPC13) of Bos taurus (Bovine).